We begin with the raw amino-acid sequence, 457 residues long: RuvB-like helicase 1 (457 aa).

72 to 79 (GAPGTGKT) is a binding site for ATP.

Belongs to the RuvB family. As to quaternary structure, may form heterododecamers with RVB2. Component of the SWR1 chromatin remodeling complex, the INO80 chromatin remodeling complex, and of the R2TP complex.

The protein localises to the nucleus. The catalysed reaction is ATP + H2O = ADP + phosphate + H(+). Its function is as follows. DNA helicase which participates in several chromatin remodeling complexes, including the SWR1 and the INO80 complexes. The SWR1 complex mediates the ATP-dependent exchange of histone H2A for the H2A variant HZT1 leading to transcriptional regulation of selected genes by chromatin remodeling. The INO80 complex remodels chromatin by shifting nucleosomes and is involved in DNA repair. Also involved in pre-rRNA processing. This is RuvB-like helicase 1 (RBV1) from Debaryomyces hansenii (strain ATCC 36239 / CBS 767 / BCRC 21394 / JCM 1990 / NBRC 0083 / IGC 2968) (Yeast).